The following is a 276-amino-acid chain: MDTYAVIGNPVAHSKSPFIHARFAQQTGRIIHYTALLAPLDRFEQTVLDFRKTGGKGMNITVPFKFEAFTLASRLTDRASAARAVNTFRFEETGEILGDNTDGVGLIRDIEVNLNFPLAGKRILLMGAGGAASGVILPLLQQQPDLLAIANRTPDKAVSLQRQFASYSNITTGHYHDFAGQHFDLIINATSASLHNELPPVPADLFRNAFAYDMLYSSRLTPFLELARVQGAGYLADGAGMLVEQAAESFLLWHGIRPETQTVIRQLRDNLRHPTS.

Shikimate is bound by residues 14 to 16 (SKS) and T61. The active-site Proton acceptor is K65. D77 is an NADP(+) binding site. Residues N86 and D102 each coordinate shikimate. NADP(+) contacts are provided by residues 127–131 (GAGGA), 151–156 (NRTPDK), and M214. Position 216 (Y216) interacts with shikimate. An NADP(+)-binding site is contributed by G238.

It belongs to the shikimate dehydrogenase family. Homodimer.

It carries out the reaction shikimate + NADP(+) = 3-dehydroshikimate + NADPH + H(+). It participates in metabolic intermediate biosynthesis; chorismate biosynthesis; chorismate from D-erythrose 4-phosphate and phosphoenolpyruvate: step 4/7. In terms of biological role, involved in the biosynthesis of the chorismate, which leads to the biosynthesis of aromatic amino acids. Catalyzes the reversible NADPH linked reduction of 3-dehydroshikimate (DHSA) to yield shikimate (SA). The polypeptide is Shikimate dehydrogenase (NADP(+)) (Nitrosomonas europaea (strain ATCC 19718 / CIP 103999 / KCTC 2705 / NBRC 14298)).